Reading from the N-terminus, the 285-residue chain is Eukaryotic translation initiation factor 3 subunit J (285 aa).

Disordered regions lie at residues Met1–Glu86 and Gln232–Met285. Residues Trp22–Glu41 are compositionally biased toward acidic residues. A coiled-coil region spans residues Asp36–Phe81. Positions Glu42–Glu86 are enriched in basic and acidic residues. Residues Asp269–Met285 show a composition bias toward acidic residues.

Belongs to the eIF-3 subunit J family. Component of the eukaryotic translation initiation factor 3 (eIF-3) complex.

The protein localises to the cytoplasm. Component of the eukaryotic translation initiation factor 3 (eIF-3) complex, which is involved in protein synthesis of a specialized repertoire of mRNAs and, together with other initiation factors, stimulates binding of mRNA and methionyl-tRNAi to the 40S ribosome. The eIF-3 complex specifically targets and initiates translation of a subset of mRNAs involved in cell proliferation. This Candida albicans (strain SC5314 / ATCC MYA-2876) (Yeast) protein is Eukaryotic translation initiation factor 3 subunit J.